Reading from the N-terminus, the 362-residue chain is Phospho-N-acetylmuramoyl-pentapeptide-transferase (362 aa).

10 helical membrane-spanning segments follow: residues 28-48 (GAVL…IAWL), 75-95 (TMGG…WADL), 100-120 (VWIV…DDYL), 134-154 (AKLV…WSLQ), 170-190 (VLLQ…VGAG), 201-221 (GLAI…SYLV), 241-261 (LAVF…FNAP), 265-285 (VFMG…ISVV), 290-310 (LVLG…IVQV), and 339-359 (TVVI…LATL).

It belongs to the glycosyltransferase 4 family. MraY subfamily. Requires Mg(2+) as cofactor.

The protein localises to the cell inner membrane. The enzyme catalyses UDP-N-acetyl-alpha-D-muramoyl-L-alanyl-gamma-D-glutamyl-meso-2,6-diaminopimeloyl-D-alanyl-D-alanine + di-trans,octa-cis-undecaprenyl phosphate = di-trans,octa-cis-undecaprenyl diphospho-N-acetyl-alpha-D-muramoyl-L-alanyl-D-glutamyl-meso-2,6-diaminopimeloyl-D-alanyl-D-alanine + UMP. Its pathway is cell wall biogenesis; peptidoglycan biosynthesis. Functionally, catalyzes the initial step of the lipid cycle reactions in the biosynthesis of the cell wall peptidoglycan: transfers peptidoglycan precursor phospho-MurNAc-pentapeptide from UDP-MurNAc-pentapeptide onto the lipid carrier undecaprenyl phosphate, yielding undecaprenyl-pyrophosphoryl-MurNAc-pentapeptide, known as lipid I. In Paramagnetospirillum magneticum (strain ATCC 700264 / AMB-1) (Magnetospirillum magneticum), this protein is Phospho-N-acetylmuramoyl-pentapeptide-transferase.